Here is a 325-residue protein sequence, read N- to C-terminus: Ribosomal RNA small subunit methyltransferase H (325 aa).

S-adenosyl-L-methionine is bound by residues 33-35 (GGH), D52, L87, D101, and Q108. Residues 285 to 325 (AEPAGEVEKADNPRAASVRLRAAERTAPNPDRTQPTIGGAS) are disordered. Residues 315-325 (DRTQPTIGGAS) show a composition bias toward polar residues.

Belongs to the methyltransferase superfamily. RsmH family.

It is found in the cytoplasm. It catalyses the reaction cytidine(1402) in 16S rRNA + S-adenosyl-L-methionine = N(4)-methylcytidine(1402) in 16S rRNA + S-adenosyl-L-homocysteine + H(+). Its function is as follows. Specifically methylates the N4 position of cytidine in position 1402 (C1402) of 16S rRNA. This Frankia alni (strain DSM 45986 / CECT 9034 / ACN14a) protein is Ribosomal RNA small subunit methyltransferase H.